The sequence spans 145 residues: Large-conductance mechanosensitive channel (145 aa).

The next 3 membrane-spanning stretches (helical) occupy residues 14 to 34 (VMDL…VKSL), 38 to 58 (LIMP…YFLP), and 81 to 101 (GSFL…FLMV).

It belongs to the MscL family. As to quaternary structure, homopentamer.

Its subcellular location is the cell inner membrane. Functionally, channel that opens in response to stretch forces in the membrane lipid bilayer. May participate in the regulation of osmotic pressure changes within the cell. This is Large-conductance mechanosensitive channel from Rhizobium etli (strain CIAT 652).